The primary structure comprises 633 residues: MAKIIQLSDDLSNKIAAGEVVERPASVVKELMENAIDASSTVVEIDVEEAGLSSIRMIDNGVGIDAEDCKLAFQRHATSKIKDENDLFRVRTLGFRGEALPSIASVSHLEMKTSTGEGAGTHLVLQGGKIISEKKTSGRRGTEIVVTNLFYNTPARLKYMKTVHTELGNISDVVNRIALAHPEVSIRLRHQGKVLLQTNGNGDVRHVLAAIYGTAVAKKMVPLHVQSLDFEVKGYISLPEVTRASRNYMSSVVNGRYVKHFPLVKAVHEGYHTLLPIGRHPITFIEMKMDPILVDVNVHPSKLEVRLSKEQELHELIKQGIKDVFQKQQLIPSASVPKKAPMPAIKNEQQSLTFDAKKGNTNEMETPLSYEPEPLESVVYETNQMSTYGMPVQEMTGASSPVFREDAPSERVHKEESAASLEYEESVLREDDAEAISENERVPVMYPIGQMHGTYILAQNERGLYIIDQHAAQERIKYEYYREKVGEIEQEVQEMLVPLTFHYSKNDMLIIEEHKEILTKVGVFLEPFGSGSYIVRSHPQWFPKGEEAELIEEIIEQVLVEKRVDIKKLREEAAIMMSCKGSIKANRHLRNDEIKALLDELRQTKDPFTCPHGRPIIIHHSTYEMEKMFKRVM.

The protein belongs to the DNA mismatch repair MutL/HexB family.

Functionally, this protein is involved in the repair of mismatches in DNA. It is required for dam-dependent methyl-directed DNA mismatch repair. May act as a 'molecular matchmaker', a protein that promotes the formation of a stable complex between two or more DNA-binding proteins in an ATP-dependent manner without itself being part of a final effector complex. The sequence is that of DNA mismatch repair protein MutL from Bacillus pumilus (strain SAFR-032).